A 100-amino-acid chain; its full sequence is Urease subunit gamma (100 aa).

It belongs to the urease gamma subunit family. As to quaternary structure, heterotrimer of UreA (gamma), UreB (beta) and UreC (alpha) subunits. Three heterotrimers associate to form the active enzyme.

It is found in the cytoplasm. It catalyses the reaction urea + 2 H2O + H(+) = hydrogencarbonate + 2 NH4(+). The protein operates within nitrogen metabolism; urea degradation; CO(2) and NH(3) from urea (urease route): step 1/1. The chain is Urease subunit gamma from Haemophilus influenzae (strain PittEE).